The chain runs to 120 residues: Large ribosomal subunit protein uL18 (120 aa).

The segment covering 1–10 has biased composition (basic and acidic residues); that stretch reads MKRTRTESVQ. A disordered region spans residues 1-24; that stretch reads MKRTRTESVQRRHSRIRRKVEGTP.

This sequence belongs to the universal ribosomal protein uL18 family. In terms of assembly, part of the 50S ribosomal subunit; part of the 5S rRNA/L5/L18/L25 subcomplex. Contacts the 5S and 23S rRNAs.

This is one of the proteins that bind and probably mediate the attachment of the 5S RNA into the large ribosomal subunit, where it forms part of the central protuberance. In Gloeothece citriformis (strain PCC 7424) (Cyanothece sp. (strain PCC 7424)), this protein is Large ribosomal subunit protein uL18.